Here is a 243-residue protein sequence, read N- to C-terminus: Probable transcriptional regulatory protein BDU_30 (243 aa).

Belongs to the TACO1 family.

Its subcellular location is the cytoplasm. This is Probable transcriptional regulatory protein BDU_30 from Borrelia duttonii (strain Ly).